We begin with the raw amino-acid sequence, 268 residues long: Interleukin-1 beta (268 aa).

A propeptide spanning residues 1–116 (MATVPELTSE…TWDDYSLECD (116 aa)) is cleaved from the precursor.

It belongs to the IL-1 family. In terms of assembly, monomer. In its precursor form, weakly interacts with full-length MEFV; the mature cytokine does not interact at all. Interacts with integrins ITGAV:ITGBV and ITGA5:ITGB1; integrin-binding is required for IL1B signaling. Interacts with cargo receptor TMED10; the interaction is direct and is required for the secretion of IL1B mature form. Interacts with HSP90AB1; the interaction facilitates cargo translocation into the ERGIC. Interacts with HSP90B1; the interaction facilitates cargo translocation into the ERGIC.

It localises to the cytoplasm. Its subcellular location is the cytosol. The protein resides in the secreted. It is found in the lysosome. The protein localises to the extracellular exosome. Potent pro-inflammatory cytokine. Initially discovered as the major endogenous pyrogen, induces prostaglandin synthesis, neutrophil influx and activation, T-cell activation and cytokine production, B-cell activation and antibody production, and fibroblast proliferation and collagen production. Promotes Th17 differentiation of T-cells. Synergizes with IL12/interleukin-12 to induce IFNG synthesis from T-helper 1 (Th1) cells. Plays a role in angiogenesis by inducing VEGF production synergistically with TNF and IL6. Involved in transduction of inflammation downstream of pyroptosis: its mature form is specifically released in the extracellular milieu by passing through the gasdermin-D (GSDMD) pore. The chain is Interleukin-1 beta (IL1B) from Oryctolagus cuniculus (Rabbit).